Here is a 90-residue protein sequence, read N- to C-terminus: Putative septation protein SpoVG (90 aa).

Belongs to the SpoVG family.

In terms of biological role, could be involved in septation. This is Putative septation protein SpoVG from Clostridium perfringens (strain ATCC 13124 / DSM 756 / JCM 1290 / NCIMB 6125 / NCTC 8237 / Type A).